The following is a 371-amino-acid chain: Anhydro-N-acetylmuramic acid kinase (371 aa).

An ATP-binding site is contributed by 15–22 (GTSLDGVD).

The protein belongs to the anhydro-N-acetylmuramic acid kinase family.

The enzyme catalyses 1,6-anhydro-N-acetyl-beta-muramate + ATP + H2O = N-acetyl-D-muramate 6-phosphate + ADP + H(+). The protein operates within amino-sugar metabolism; 1,6-anhydro-N-acetylmuramate degradation. It functions in the pathway cell wall biogenesis; peptidoglycan recycling. Catalyzes the specific phosphorylation of 1,6-anhydro-N-acetylmuramic acid (anhMurNAc) with the simultaneous cleavage of the 1,6-anhydro ring, generating MurNAc-6-P. Is required for the utilization of anhMurNAc either imported from the medium or derived from its own cell wall murein, and thus plays a role in cell wall recycling. This is Anhydro-N-acetylmuramic acid kinase from Cereibacter sphaeroides (strain ATCC 17023 / DSM 158 / JCM 6121 / CCUG 31486 / LMG 2827 / NBRC 12203 / NCIMB 8253 / ATH 2.4.1.) (Rhodobacter sphaeroides).